The chain runs to 343 residues: Cytoplasmic tRNA 2-thiolation protein 1 (343 aa).

This sequence belongs to the TtcA family. CTU1/NCS6/ATPBD3 subfamily.

Its subcellular location is the cytoplasm. Its pathway is tRNA modification; 5-methoxycarbonylmethyl-2-thiouridine-tRNA biosynthesis. In terms of biological role, plays a central role in 2-thiolation of mcm(5)S(2)U at tRNA wobble positions of tRNA(Lys), tRNA(Glu) and tRNA(Gln). Directly binds tRNAs and probably acts by catalyzing adenylation of tRNAs, an intermediate required for 2-thiolation. It is unclear whether it acts as a sulfurtransferase that transfers sulfur from thiocarboxylated URM1 onto the uridine of tRNAs at wobble position. The polypeptide is Cytoplasmic tRNA 2-thiolation protein 1 (Drosophila sechellia (Fruit fly)).